Consider the following 275-residue polypeptide: Bis(5'-nucleosyl)-tetraphosphatase, symmetrical (275 aa).

It belongs to the Ap4A hydrolase family.

It carries out the reaction P(1),P(4)-bis(5'-adenosyl) tetraphosphate + H2O = 2 ADP + 2 H(+). Functionally, hydrolyzes diadenosine 5',5'''-P1,P4-tetraphosphate to yield ADP. In Pasteurella multocida (strain Pm70), this protein is Bis(5'-nucleosyl)-tetraphosphatase, symmetrical (apaH).